The following is a 449-amino-acid chain: Tubulin alpha-8 chain (449 aa).

An MREC motif motif is present at residues 1–4; it reads MREC. GTP is bound by residues glutamine 11, glutamate 71, serine 140, glycine 144, threonine 145, threonine 179, asparagine 206, and asparagine 228. Glutamate 71 provides a ligand contact to Mg(2+). The active site involves glutamate 254.

The protein belongs to the tubulin family. In terms of assembly, dimer of alpha and beta chains. A typical microtubule is a hollow water-filled tube with an outer diameter of 25 nm and an inner diameter of 15 nM. Alpha-beta heterodimers associate head-to-tail to form protofilaments running lengthwise along the microtubule wall with the beta-tubulin subunit facing the microtubule plus end conferring a structural polarity. Microtubules usually have 13 protofilaments but different protofilament numbers can be found in some organisms and specialized cells. The cofactor is Mg(2+). Post-translationally, some glutamate residues at the C-terminus are polyglycylated, resulting in polyglycine chains on the gamma-carboxyl group. Glycylation is mainly limited to tubulin incorporated into axonemes (cilia and flagella) whereas glutamylation is prevalent in neuronal cells, centrioles, axonemes, and the mitotic spindle. Both modifications can coexist on the same protein on adjacent residues, and lowering polyglycylation levels increases polyglutamylation, and reciprocally. Cilia and flagella glycylation is required for their stability and maintenance. Flagella glycylation controls sperm motility. In terms of processing, some glutamate residues at the C-terminus are polyglutamylated, resulting in polyglutamate chains on the gamma-carboxyl group. Polyglutamylation plays a key role in microtubule severing by spastin (SPAST). SPAST preferentially recognizes and acts on microtubules decorated with short polyglutamate tails: severing activity by SPAST increases as the number of glutamates per tubulin rises from one to eight, but decreases beyond this glutamylation threshold. Glutamylation is also involved in cilia motility. The C-terminal phenylalanine residue is cleaved by MATCAP1/KIAA0895L.

It localises to the cytoplasm. Its subcellular location is the cytoskeleton. The catalysed reaction is GTP + H2O = GDP + phosphate + H(+). Its function is as follows. Tubulin is the major constituent of microtubules, a cylinder consisting of laterally associated linear protofilaments composed of alpha- and beta-tubulin heterodimers. Microtubules grow by the addition of GTP-tubulin dimers to the microtubule end, where a stabilizing cap forms. Below the cap, tubulin dimers are in GDP-bound state, owing to GTPase activity of alpha-tubulin. The sequence is that of Tubulin alpha-8 chain (TUBA8) from Bos taurus (Bovine).